Here is a 55-residue protein sequence, read N- to C-terminus: Large ribosomal subunit protein bL33 (55 aa).

The protein belongs to the bacterial ribosomal protein bL33 family.

The protein is Large ribosomal subunit protein bL33 of Chelativorans sp. (strain BNC1).